Consider the following 508-residue polypeptide: Bifunctional purine biosynthesis protein PurH (508 aa).

An MGS-like domain is found at 1–145 (MTKRALISVS…KNHQYVTVIV (145 aa)).

This sequence belongs to the PurH family.

The catalysed reaction is (6R)-10-formyltetrahydrofolate + 5-amino-1-(5-phospho-beta-D-ribosyl)imidazole-4-carboxamide = 5-formamido-1-(5-phospho-D-ribosyl)imidazole-4-carboxamide + (6S)-5,6,7,8-tetrahydrofolate. The enzyme catalyses IMP + H2O = 5-formamido-1-(5-phospho-D-ribosyl)imidazole-4-carboxamide. The protein operates within purine metabolism; IMP biosynthesis via de novo pathway; 5-formamido-1-(5-phospho-D-ribosyl)imidazole-4-carboxamide from 5-amino-1-(5-phospho-D-ribosyl)imidazole-4-carboxamide (10-formyl THF route): step 1/1. It functions in the pathway purine metabolism; IMP biosynthesis via de novo pathway; IMP from 5-formamido-1-(5-phospho-D-ribosyl)imidazole-4-carboxamide: step 1/1. The sequence is that of Bifunctional purine biosynthesis protein PurH from Lysinibacillus sphaericus (strain C3-41).